Here is a 97-residue protein sequence, read N- to C-terminus: MKPTMLLMITVFLIFPALSQAESPFSSLQSAKEKTTVLQDLRKICTPQASLSDEAWEKLMLSDENNKQHIREAIVAMERNNQSNYWEALGKVECPDM.

This is an uncharacterized protein from Escherichia coli O157:H7.